The primary structure comprises 757 residues: 5-methyltetrahydropteroyltriglutamate--homocysteine methyltransferase (757 aa).

5-methyltetrahydropteroyltri-L-glutamate contacts are provided by residues 16–19 (RELK) and Lys112. Residues 432 to 434 (IGS) and Glu485 contribute to the L-homocysteine site. L-methionine contacts are provided by residues 432–434 (IGS) and Glu485. Residues 516-517 (RC) and Trp562 contribute to the 5-methyltetrahydropteroyltri-L-glutamate site. Asp600 is a binding site for L-homocysteine. Asp600 contacts L-methionine. Glu606 contributes to the 5-methyltetrahydropteroyltri-L-glutamate binding site. Zn(2+) is bound by residues His642, Cys644, and Glu666. His695 (proton donor) is an active-site residue. Cys727 contributes to the Zn(2+) binding site.

It belongs to the vitamin-B12 independent methionine synthase family. Requires Zn(2+) as cofactor.

It catalyses the reaction 5-methyltetrahydropteroyltri-L-glutamate + L-homocysteine = tetrahydropteroyltri-L-glutamate + L-methionine. The protein operates within amino-acid biosynthesis; L-methionine biosynthesis via de novo pathway; L-methionine from L-homocysteine (MetE route): step 1/1. Its function is as follows. Catalyzes the transfer of a methyl group from 5-methyltetrahydrofolate to homocysteine resulting in methionine formation. The sequence is that of 5-methyltetrahydropteroyltriglutamate--homocysteine methyltransferase from Actinobacillus pleuropneumoniae serotype 7 (strain AP76).